The sequence spans 678 residues: uncharacterized protein (678 aa).

This is an uncharacterized protein from Ostreid herpesvirus 1 (isolate France) (OsHV-1).